The sequence spans 641 residues: 1-deoxy-D-xylulose-5-phosphate synthase (641 aa).

Thiamine diphosphate-binding positions include His-79 and 120-122 (GHS). Asp-151 is a Mg(2+) binding site. Residues 152–153 (GS), Asn-180, Tyr-290, and Glu-372 each bind thiamine diphosphate. Asn-180 lines the Mg(2+) pocket.

It belongs to the transketolase family. DXPS subfamily. Homodimer. Mg(2+) serves as cofactor. Thiamine diphosphate is required as a cofactor.

It carries out the reaction D-glyceraldehyde 3-phosphate + pyruvate + H(+) = 1-deoxy-D-xylulose 5-phosphate + CO2. It participates in metabolic intermediate biosynthesis; 1-deoxy-D-xylulose 5-phosphate biosynthesis; 1-deoxy-D-xylulose 5-phosphate from D-glyceraldehyde 3-phosphate and pyruvate: step 1/1. Catalyzes the acyloin condensation reaction between C atoms 2 and 3 of pyruvate and glyceraldehyde 3-phosphate to yield 1-deoxy-D-xylulose-5-phosphate (DXP). This Rhodopseudomonas palustris (strain TIE-1) protein is 1-deoxy-D-xylulose-5-phosphate synthase.